Consider the following 417-residue polypeptide: NADH-quinone oxidoreductase subunit D (417 aa).

Belongs to the complex I 49 kDa subunit family. NDH-1 is composed of 14 different subunits. Subunits NuoB, C, D, E, F, and G constitute the peripheral sector of the complex.

The protein resides in the cell inner membrane. The catalysed reaction is a quinone + NADH + 5 H(+)(in) = a quinol + NAD(+) + 4 H(+)(out). Functionally, NDH-1 shuttles electrons from NADH, via FMN and iron-sulfur (Fe-S) centers, to quinones in the respiratory chain. The immediate electron acceptor for the enzyme in this species is believed to be ubiquinone. Couples the redox reaction to proton translocation (for every two electrons transferred, four hydrogen ions are translocated across the cytoplasmic membrane), and thus conserves the redox energy in a proton gradient. In Halorhodospira halophila (strain DSM 244 / SL1) (Ectothiorhodospira halophila (strain DSM 244 / SL1)), this protein is NADH-quinone oxidoreductase subunit D.